Consider the following 589-residue polypeptide: MGSIFKDGRRILVRPKSLIICLCLISIIFTQLIRYQYQLIADEVQPTINEDHSSSQSLKNTKLNSTRSSSPISPPKSLNKLTSQEFWEHIFNIFEINKFDDGLKPLIKYTPKEQQLTTKIKTRDWLLSKANIFHKDIIRQYHESVLRNLPSKLPKSVYTPNTYGIVTIGGNFYSWMAYIQLLQLRKLGSNLPVEILIPSIEDYYKEAHFCDHVLPQYNAKCILVPEKLGFNVAKHWKFSSYQFKALALCLSSFQHVLILDSDNVVLSKPEKVFDSPVYRDNGMVLWPDYWERTISPEWYDIIGKPVVGNKQVRTGRFPVNIHNMLTSELEINETRFHDLEGALPDLSTESGQVMFNKKTHGKVMLMTLYYNIFGPEIYYKLFSLGALGEGDKDTFAAAALACGEKYYQVASSIRTLGYFDTTPGGGFHGMAMAQKNPQLDYQLFQKTNQNFKDLHLDWDNEAKDQFSANNKIPIFTMHCNIKKINPAAYMKDEKIANMDEKRMNVRFYSNLKFKLNDDDIYSPDNEKEKNKSEKTDNDPNEIDFELSRWQIVSEILCDQKITFQFLKDENMDEVCQFVKNTIAWLGKKT.

Over 1-16 (MGSIFKDGRRILVRPK) the chain is Cytoplasmic. A helical transmembrane segment spans residues 17 to 33 (SLIICLCLISIIFTQLI). Topologically, residues 34 to 589 (RYQYQLIADE…NTIAWLGKKT (556 aa)) are extracellular. The disordered stretch occupies residues 50–77 (EDHSSSQSLKNTKLNSTRSSSPISPPKS). Residues 54-71 (SSQSLKNTKLNSTRSSSP) are compositionally biased toward polar residues. N-linked (GlcNAc...) asparagine glycosylation is found at Asn-64, Asn-332, and Asn-530.

The protein belongs to the MNN1/MNT family.

Its subcellular location is the golgi apparatus membrane. It participates in protein modification; protein glycosylation. In terms of biological role, alpha-1,2-mannosyltransferase required for cell wall integrity. Responsible for addition of the first alpha-1,2-linked mannose to form the branches on the mannan backbone of oligosaccharides. Addition of alpha-1,2-mannose is required for stabilization of the alpha-1,6-mannose backbone and hence regulates mannan fibril length; and is important for both immune recognition and virulence. The sequence is that of Alpha-1,2-mannosyltransferase MNN22 (MNN22) from Candida albicans (strain SC5314 / ATCC MYA-2876) (Yeast).